The following is a 170-amino-acid chain: Adenine phosphoribosyltransferase (170 aa).

It belongs to the purine/pyrimidine phosphoribosyltransferase family. In terms of assembly, homodimer.

It is found in the cytoplasm. It carries out the reaction AMP + diphosphate = 5-phospho-alpha-D-ribose 1-diphosphate + adenine. It functions in the pathway purine metabolism; AMP biosynthesis via salvage pathway; AMP from adenine: step 1/1. Its function is as follows. Catalyzes a salvage reaction resulting in the formation of AMP, that is energically less costly than de novo synthesis. The chain is Adenine phosphoribosyltransferase from Brevibacillus brevis (strain 47 / JCM 6285 / NBRC 100599).